The sequence spans 575 residues: Phosphoenolpyruvate-protein phosphotransferase (575 aa).

The Tele-phosphohistidine intermediate role is filled by His189. 2 residues coordinate phosphoenolpyruvate: Arg296 and Arg332. Mg(2+)-binding residues include Glu431 and Asp455. Phosphoenolpyruvate-binding positions include 454–455 (ND) and Arg465. Cys502 (proton donor) is an active-site residue.

The protein belongs to the PEP-utilizing enzyme family. Homodimer. Requires Mg(2+) as cofactor.

It localises to the cytoplasm. It carries out the reaction L-histidyl-[protein] + phosphoenolpyruvate = N(pros)-phospho-L-histidyl-[protein] + pyruvate. Its function is as follows. General (non sugar-specific) component of the phosphoenolpyruvate-dependent sugar phosphotransferase system (sugar PTS). This major carbohydrate active-transport system catalyzes the phosphorylation of incoming sugar substrates concomitantly with their translocation across the cell membrane. Enzyme I transfers the phosphoryl group from phosphoenolpyruvate (PEP) to the phosphoryl carrier protein (HPr). This Haemophilus influenzae (strain ATCC 51907 / DSM 11121 / KW20 / Rd) protein is Phosphoenolpyruvate-protein phosphotransferase (ptsI).